A 324-amino-acid chain; its full sequence is Phospho-N-acetylmuramoyl-pentapeptide-transferase (324 aa).

A run of 9 helical transmembrane segments spans residues 13–33, 59–79, 85–105, 121–141, 143–163, 179–199, 201–221, 243–263, and 303–323; these read VLSALLMGFAFSMVLGPIFIP, PTMGGLIFFISVTVTMLIIGY, GMVVLYSLIAFGIIGFLDDIL, MILLLLFSIALAYYGYTNIGT, IIIPFMNSKLNLGIFYIPLVV, IDGLASSVTVIVLTFFAIVGF, TGHYQVGVFSIALAGALLGFL, AIATIALILKMPLFIIIVGGI, and VKLVTVFSIITLILCIIGFIA.

Belongs to the glycosyltransferase 4 family. MraY subfamily. Mg(2+) serves as cofactor.

It is found in the cell membrane. The enzyme catalyses UDP-N-acetyl-alpha-D-muramoyl-L-alanyl-gamma-D-glutamyl-meso-2,6-diaminopimeloyl-D-alanyl-D-alanine + di-trans,octa-cis-undecaprenyl phosphate = di-trans,octa-cis-undecaprenyl diphospho-N-acetyl-alpha-D-muramoyl-L-alanyl-D-glutamyl-meso-2,6-diaminopimeloyl-D-alanyl-D-alanine + UMP. Its pathway is cell wall biogenesis; peptidoglycan biosynthesis. Its function is as follows. Catalyzes the initial step of the lipid cycle reactions in the biosynthesis of the cell wall peptidoglycan: transfers peptidoglycan precursor phospho-MurNAc-pentapeptide from UDP-MurNAc-pentapeptide onto the lipid carrier undecaprenyl phosphate, yielding undecaprenyl-pyrophosphoryl-MurNAc-pentapeptide, known as lipid I. The sequence is that of Phospho-N-acetylmuramoyl-pentapeptide-transferase from Clostridium botulinum (strain Alaska E43 / Type E3).